We begin with the raw amino-acid sequence, 330 residues long: DNA-directed RNA polymerase subunit alpha (330 aa).

Positions 1–232 (MAILAFQKPD…YHFMLFSDEK (232 aa)) are alpha N-terminal domain (alpha-NTD). Residues 248-330 (EEVLHMRQLL…DISKYKLDKE (83 aa)) are alpha C-terminal domain (alpha-CTD).

It belongs to the RNA polymerase alpha chain family. Homodimer. The RNAP catalytic core consists of 2 alpha, 1 beta, 1 beta' and 1 omega subunit. When a sigma factor is associated with the core the holoenzyme is formed, which can initiate transcription.

It carries out the reaction RNA(n) + a ribonucleoside 5'-triphosphate = RNA(n+1) + diphosphate. DNA-dependent RNA polymerase catalyzes the transcription of DNA into RNA using the four ribonucleoside triphosphates as substrates. The protein is DNA-directed RNA polymerase subunit alpha of Bacteroides thetaiotaomicron (strain ATCC 29148 / DSM 2079 / JCM 5827 / CCUG 10774 / NCTC 10582 / VPI-5482 / E50).